Consider the following 169-residue polypeptide: MEVYIPSFRYEESDLERGYTVFKIEVLMNGRKHFVEKRYSEFHALHKKLKKCIKTPEIPSKHVRNWVPKVLEQRRQGLETYLQAVILENEELPKLFLDFLNVRHLPSLPKAESCGSFDETESEESSKLSHQPVLLFLRDPYVLPAASDFPNVVIEGVLHGIFYPHLQPR.

Met1 is subject to N-acetylmethionine. Residues 1 to 125 (MEVYIPSFRY…SFDETESEES (125 aa)) enclose the PX domain. Residues Arg38, Ser40, Lys61, and Arg74 each coordinate a 1,2-diacyl-sn-glycero-3-phospho-(1D-myo-inositol-3-phosphate). Residues Ser113 and Ser116 each carry the phosphoserine modification.

This sequence belongs to the sorting nexin family.

The protein localises to the cytoplasmic vesicle membrane. May be involved in several stages of intracellular trafficking. This chain is Sorting nexin-24 (SNX24), found in Homo sapiens (Human).